An 814-amino-acid chain; its full sequence is MMILSIIATVVLLGALFYHRVSLFLSSLILLAWTAALGVAGLWSIWLLVPLAIILVPFNLTPMRKSMISAPVFRGFRKVMPPMSRTEKEAIDAGTTWWEGDLFQGKPDWKKLHNYPQPQLTAEEQAFLDGPVEEACRMANDFQITHELADLPPELWAYLKEHRFFAMIIKKEYGGLEFSAYVQSRVLQKLSGVSGILAITVGVPNSLGPGELLQHYGTEEQKNHYLPRLARGQEIPCFALTSPEAGSDAGAIPDTGVVCMGEWQGQQVLGMRLTWNKRYITLAPIATVLGLAFKLSDPDRLLGGEEELGITCALIPTSTPGVEIGRRHFPLNVPFQNGPTRGNDIFVPIDYIIGGPKMAGQGWRMLVECLSVGRGITLPSNSTGGVKSVALATGAYAHIRRQFKISIGKMEGIEEPLARIAGNAYVMDAAASLITYGIMLGEKPAVLSAIVKYHCTHRGQQSIIDAMDITGGKGIMLGESNFLARAYQGAPIAITVEGANILTRSMMIFGQGAIRCHPYVLEEMAAAQNNDVNAFDKLLFKHIGHVGSNTVRSFWLGLTRGLTSHTPTGDATKRYYQHLNRLSANLALLSDVSMAVLGGSLKRRERISTRLGDVLSQLYLASAVLKRYDDEGRHEADLPLVHWGVQDALYRAEQAMDDLLQNFPNRVVAGLLTAMIFPTGRHYLAPSDKLDHAVAKILQVPNATRSRIGRGQYLTPAEHNPVGLLEEALRDVIAADPIHQRICKELGKNLPFTRLDELARNALAKGLIDKDEAAILAKAEESRLRSINVDDFEPEALATKPVKLPEKVRKVEAA.

The active-site Proton acceptor is Glu-497.

This sequence belongs to the acyl-CoA dehydrogenase family. Requires FAD as cofactor.

The enzyme catalyses a medium-chain 2,3-saturated fatty acyl-CoA + oxidized [electron-transfer flavoprotein] + H(+) = a medium-chain (2E)-enoyl-CoA + reduced [electron-transfer flavoprotein]. It carries out the reaction a long-chain 2,3-saturated fatty acyl-CoA + oxidized [electron-transfer flavoprotein] + H(+) = a long-chain (2E)-enoyl-CoA + reduced [electron-transfer flavoprotein]. It participates in lipid metabolism; fatty acid beta-oxidation. Its function is as follows. Catalyzes the dehydrogenation of acyl-coenzymes A (acyl-CoAs) to 2-enoyl-CoAs, the first step of the beta-oxidation cycle of fatty acid degradation. Is required for the utilization of medium- and long-chain fatty acids as sole carbon sources for growth. Is needed for bacterial survival during carbone-source starvation. This Salmonella typhi protein is Acyl-coenzyme A dehydrogenase (fadE).